The primary structure comprises 369 residues: DNA replication and repair protein RecF (369 aa).

30–37 provides a ligand contact to ATP; that stretch reads GPNGSGKT.

It belongs to the RecF family.

The protein localises to the cytoplasm. Functionally, the RecF protein is involved in DNA metabolism; it is required for DNA replication and normal SOS inducibility. RecF binds preferentially to single-stranded, linear DNA. It also seems to bind ATP. The sequence is that of DNA replication and repair protein RecF from Chlorobium luteolum (strain DSM 273 / BCRC 81028 / 2530) (Pelodictyon luteolum).